We begin with the raw amino-acid sequence, 365 residues long: Casein kinase I homolog hhp1 (365 aa).

In terms of domain architecture, Protein kinase spans 11–279; it reads YRIGRKIGSG…YLRKLFRDLF (269 aa). ATP-binding positions include 17 to 25 and lysine 40; that span reads IGSGSFGDI. The active-site Proton acceptor is the aspartate 130. Residues 301-311 are compositionally biased toward low complexity; the sequence is DQQHQQQLQQQ. The segment at 301 to 365 is disordered; sequence DQQHQQQLQQ…TGAQYINRPN (65 aa). Residues 343–365 are compositionally biased toward polar residues; that stretch reads INTTVPVINDPSATGAQYINRPN.

The protein belongs to the protein kinase superfamily. CK1 Ser/Thr protein kinase family. Casein kinase I subfamily.

The protein localises to the nucleus. It catalyses the reaction L-seryl-[protein] + ATP = O-phospho-L-seryl-[protein] + ADP + H(+). The catalysed reaction is L-threonyl-[protein] + ATP = O-phospho-L-threonyl-[protein] + ADP + H(+). Involved in DNA repair. Has a probable role in repairing alkylated DNA and may regulate the activity of protein(s) involved in double strand break repair caused by gamma rays. The protein is Casein kinase I homolog hhp1 (hhp1) of Schizosaccharomyces pombe (strain 972 / ATCC 24843) (Fission yeast).